A 907-amino-acid chain; its full sequence is Envelope glycoprotein B (907 aa).

The N-terminal stretch at 1–22 (MESRIWCLVVCVNLCIVCLGAA) is a signal peptide. The Virion surface segment spans residues 23-751 (VSSSSTRGTS…EGVATFLKNP (729 aa)). The interval 29 to 62 (RGTSATHSHHSSHTTSAAHSRSGSVSQRVTSSQT) is disordered. Low complexity predominate over residues 41 to 62 (HTTSAAHSRSGSVSQRVTSSQT). Residues asparagine 68, asparagine 73, and asparagine 85 are each glycosylated (N-linked (GlcNAc...) asparagine; by host). Intrachain disulfides connect cysteine 94–cysteine 551, cysteine 111–cysteine 507, cysteine 185–cysteine 250, and cysteine 344–cysteine 391. The interval 152–158 (SYAYIHT) is involved in fusion and/or binding to host membrane. N-linked (GlcNAc...) asparagine; by host glycosylation is present at asparagine 208. An involved in fusion and/or binding to host membrane region spans residues 237 to 244 (GSTWLYRE). N-linked (GlcNAc...) asparagine; by host glycosylation is found at asparagine 281, asparagine 286, asparagine 302, asparagine 341, asparagine 383, asparagine 405, asparagine 409, asparagine 417, asparagine 447, asparagine 452, asparagine 456, asparagine 466, asparagine 555, and asparagine 586. Cysteine 574 and cysteine 611 are disulfide-bonded. Hydrophobic membrane proximal region regions lie at residues 697 to 749 (VEDK…TFLK) and 708 to 748 (YLKG…ATFL). Residues 752-772 (FGAFTIILVAIAVVIIIYLIY) traverse the membrane as a helical segment. At 773–907 (TRQRRLCMQP…LKDSDEEENV (135 aa)) the chain is on the intravirion side. Composition is skewed to polar residues over residues 798–810 (VTSG…SLQA) and 860–877 (RAQQ…GTQD). Disordered regions lie at residues 798-838 (VTSG…TAAP) and 860-907 (RAQQ…EENV). The segment covering 878-887 (KGQKPNLLDR) has biased composition (basic and acidic residues). Residues 895–898 (YRHL) carry the Internalization motif motif.

This sequence belongs to the herpesviridae glycoprotein B family. In terms of assembly, homotrimer; disulfide-linked. Binds to heparan sulfate proteoglycans. Interacts with gH/gL heterodimer. Interacts with host C-type lectin CD209/DC-SIGN. Interacts with host ITGB1, EGFR, and PDGFRA. A proteolytic cleavage by host furin generates two subunits that remain linked by disulfide bonds.

It localises to the virion membrane. The protein localises to the host cell membrane. It is found in the host endosome membrane. Its subcellular location is the host Golgi apparatus membrane. In terms of biological role, envelope glycoprotein that plays a role in host cell entry, cell to-cell virus transmission, and fusion of infected cells. May be involved in the initial attachment via binding to heparan sulfate together with the gM/gN complex that binds heparin with higher affinity. Interacts with host integrin ITGB1, PDGFRA and EGFR that likely serve as postattachment entry receptors. Also participates in the fusion of viral and cellular membranes leading to virus entry into the host cell. Membrane fusion is mediated by the fusion machinery composed at least of gB and the heterodimer gH/gL. The protein is Envelope glycoprotein B of Homo sapiens (Human).